The following is a 97-amino-acid chain: ATP-dependent Clp protease adapter protein ClpS (97 aa).

It belongs to the ClpS family. In terms of assembly, binds to the N-terminal domain of the chaperone ClpA.

In terms of biological role, involved in the modulation of the specificity of the ClpAP-mediated ATP-dependent protein degradation. In Nostoc sp. (strain PCC 7120 / SAG 25.82 / UTEX 2576), this protein is ATP-dependent Clp protease adapter protein ClpS.